A 655-amino-acid chain; its full sequence is RNA-binding protein EWS (655 aa).

The interval 1 to 285 is EAD (Gln/Pro/Thr-rich); sequence MASTDYSTYS…GVYGQESGGF (285 aa). Tandem repeats lie at residues 8-16, 17-27, 28-34, 35-42, 43-50, 51-59, 60-68, 69-75, 76-84, 85-91, 92-110, 111-116, 117-125, 126-156, 157-163, 164-170, 171-177, 178-188, 189-193, 194-201, 202-206, 207-212, 213-218, 219-224, 225-230, 231-238, 239-245, 246-252, 253-259, 260-276, and 277-285. The 31 X approximate tandem repeats stretch occupies residues 8–285; the sequence is TYSQAAAQQG…GVYGQESGGF (278 aa). The disordered stretch occupies residues 121-350; it reads QPAYPTYGQQ…EGPDLDLGLP (230 aa). Polar residues-rich tracts occupy residues 127 to 137 and 146 to 172; these read YGQQPTATAPT and AETSQPQSSTGGYNQPSLGYGQSNYSY. Residues 192 to 266 are compositionally biased toward low complexity; that stretch reads PTSYSSSQPT…QSSSYGQQSS (75 aa). Positions 256-285 constitute an IQ domain; it reads QQSSSYGQQSSFRQDHPSSMGVYGQESGGF. Serine 266 is modified (phosphoserine; by PKC). Residues arginine 300, arginine 302, arginine 304, arginine 309, arginine 314, arginine 317, and arginine 321 each carry the asymmetric dimethylarginine modification. A compositionally biased stretch (gly residues) spans 308–334; the sequence is DRGGMSRGGRGGGRGGLGAGERGGFNK. Positions 335 to 350 are enriched in low complexity; it reads PGGPMDEGPDLDLGLP. Residues 360-446 form the RRM domain; it reads SAIYVQGLND…SKLKVSLARK (87 aa). Lysine 438 carries the post-translational modification N6-acetyllysine. 2 disordered regions span residues 447 to 524 and 544 to 655; these read KPPM…WQCP and APKP…DRPY. Residues arginine 454 and arginine 463 each carry the asymmetric dimethylarginine modification. Arginine 470 is subject to Asymmetric dimethylarginine; alternate. Arginine 470 bears the Omega-N-methylarginine; alternate mark. A compositionally biased stretch (gly residues) spans 471–489; the sequence is GGPGGPGGPGGPMGRMGGR. Arginine 485 bears the Omega-N-methylarginine mark. Arginine 489 carries the post-translational modification Asymmetric dimethylarginine; by PRMT8. Arginine 493, arginine 499, and arginine 502 each carry asymmetric dimethylarginine. Arginine 505 is modified (asymmetric dimethylarginine; alternate). The residue at position 505 (arginine 505) is an Omega-N-methylarginine; alternate. The segment at 517-548 adopts a RanBP2-type zinc-finger fold; the sequence is RAGDWQCPNPGCGNQNFAWRTECNQCKAPKPE. Residues 550–559 show a composition bias toward pro residues; sequence FLPPPFPPPG. Asymmetric dimethylarginine is present on residues arginine 562 and arginine 564. Positions 565 to 590 are enriched in gly residues; sequence GGPGGMRGGRGGLMDRGGPGGMFRGG. Position 571 is an asymmetric dimethylarginine; alternate; by PRMT8 (arginine 571). Arginine 571 carries the omega-N-methylarginine; alternate; by PRMT8 modification. Arginine 574, arginine 580, arginine 588, and arginine 591 each carry asymmetric dimethylarginine. Residues 591 to 605 show a composition bias toward basic and acidic residues; the sequence is RGGDRGGFRGGRGMD. Asymmetric dimethylarginine; alternate; by PRMT8 is present on arginine 595. Arginine 595 is modified (omega-N-methylarginine; alternate; by PRMT8). Arginine 599 bears the Asymmetric dimethylarginine mark. Arginine 602 is subject to Asymmetric dimethylarginine; by PRMT8. The residue at position 606 (arginine 606) is an Asymmetric dimethylarginine; alternate; by PRMT8. Arginine 606 bears the Omega-N-methylarginine; alternate; by PRMT8 mark. Positions 606–617 are enriched in gly residues; the sequence is RGGFGGGRRGGP. At arginine 614 the chain carries Asymmetric dimethylarginine; alternate. Arginine 614 carries the post-translational modification Omega-N-methylarginine; alternate. An asymmetric dimethylarginine mark is found at arginine 632 and arginine 635. The Nuclear localization signal motif lies at 638-655; it reads PGKMDKGEHRQERRDRPY. The segment covering 640–655 has biased composition (basic and acidic residues); sequence KMDKGEHRQERRDRPY.

It belongs to the RRM TET family. Binds RNA, POLR2C, SF1 and calmodulin. Interacts with PTK2B and TDRD3. Forms a complex with REC8, PRDM9, SYCP3 and SYCP1; complex formation is dependent of phosphorylated form of REC8 and requires PRDM9 bound to hotspot DNA; EWSR1 joins PRDM9 with the chromosomal axis through REC8. In terms of processing, phosphorylated; calmodulin-binding inhibits phosphorylation of Ser-266. Highly methylated on arginine residues. Methylation is mediated by PRMT1 and, at lower level by PRMT8.

It is found in the nucleus. Its subcellular location is the cytoplasm. It localises to the cell membrane. Functionally, binds to ssRNA containing the consensus sequence 5'-AGGUAA-3'. Might function as a transcriptional repressor. The chain is RNA-binding protein EWS (Ewsr1) from Mus musculus (Mouse).